A 446-amino-acid polypeptide reads, in one-letter code: N-succinylarginine dihydrolase (446 aa).

Residues 21 to 30, Asn112, and 139 to 140 each bind substrate; these read AGLSWGNVAS and HR. The active site involves Glu176. Residue Arg216 participates in substrate binding. Residue His252 is part of the active site. Residues Asp254 and Asn364 each contribute to the substrate site. Cys370 serves as the catalytic Nucleophile.

This sequence belongs to the succinylarginine dihydrolase family. Homodimer.

It catalyses the reaction N(2)-succinyl-L-arginine + 2 H2O + 2 H(+) = N(2)-succinyl-L-ornithine + 2 NH4(+) + CO2. It functions in the pathway amino-acid degradation; L-arginine degradation via AST pathway; L-glutamate and succinate from L-arginine: step 2/5. Its function is as follows. Catalyzes the hydrolysis of N(2)-succinylarginine into N(2)-succinylornithine, ammonia and CO(2). This is N-succinylarginine dihydrolase from Marinobacter nauticus (strain ATCC 700491 / DSM 11845 / VT8) (Marinobacter aquaeolei).